A 275-amino-acid polypeptide reads, in one-letter code: MVHDLLRDRADLEARWNPSAYMQFARLRQRPVVELLDNIELCCPERIYDLGCGTGIATELLARRWPLAELHGVDSSVEMLEEAARLPIKASWERANLRHWCAERPASLLFAAAVLHFLEDHGKLLPRLLGQLAPGGCLAAHMPNWRDASWYRLMLDALDSAGPGGASLGSPALRYRLHRRNVLSLDNYYRLLAPLTAELDIWETEYLQVVDGNDPIFDWIKVSALRPVLGELDEEARRRFLDRYLELLHRHYPRELDGRTLFPFRRVFIVASLGR.

Belongs to the methyltransferase superfamily. Tam family.

Its subcellular location is the cytoplasm. It catalyses the reaction trans-aconitate + S-adenosyl-L-methionine = (E)-3-(methoxycarbonyl)pent-2-enedioate + S-adenosyl-L-homocysteine. In terms of biological role, catalyzes the S-adenosylmethionine monomethyl esterification of trans-aconitate. The polypeptide is Trans-aconitate 2-methyltransferase (Pseudomonas aeruginosa (strain UCBPP-PA14)).